Reading from the N-terminus, the 198-residue chain is MEAFDTHTGIGVPLRRSNVDTDQIIPAVFLKRVTRTGFEDGLFASWRSDPSFVLNLSPFDRGSVLVAGPDFGTGSSREHAVWALMDYGFRVVISSRFGDIFRGNAGKAGLLAAEVDQDGVELLWKLIEQSPGLEITVNLQDRNVIAGTVVLPFRIDDHTAWRLLEGLDDIALTLRKLDEIEAYEAAYPAWKPRTLPTS.

This sequence belongs to the LeuD family. LeuD type 1 subfamily. As to quaternary structure, heterodimer of LeuC and LeuD.

The catalysed reaction is (2R,3S)-3-isopropylmalate = (2S)-2-isopropylmalate. The protein operates within amino-acid biosynthesis; L-leucine biosynthesis; L-leucine from 3-methyl-2-oxobutanoate: step 2/4. In terms of biological role, catalyzes the isomerization between 2-isopropylmalate and 3-isopropylmalate, via the formation of 2-isopropylmaleate. The sequence is that of 3-isopropylmalate dehydratase small subunit from Mycobacterium marinum (strain ATCC BAA-535 / M).